We begin with the raw amino-acid sequence, 353 residues long: Nicotinate-nucleotide--dimethylbenzimidazole phosphoribosyltransferase (353 aa).

The active-site Proton acceptor is Glu318.

This sequence belongs to the CobT family.

The enzyme catalyses 5,6-dimethylbenzimidazole + nicotinate beta-D-ribonucleotide = alpha-ribazole 5'-phosphate + nicotinate + H(+). Its pathway is nucleoside biosynthesis; alpha-ribazole biosynthesis; alpha-ribazole from 5,6-dimethylbenzimidazole: step 1/2. Catalyzes the synthesis of alpha-ribazole-5'-phosphate from nicotinate mononucleotide (NAMN) and 5,6-dimethylbenzimidazole (DMB). The protein is Nicotinate-nucleotide--dimethylbenzimidazole phosphoribosyltransferase of Roseiflexus castenholzii (strain DSM 13941 / HLO8).